A 344-amino-acid polypeptide reads, in one-letter code: Ferrochelatase (344 aa).

Fe cation contacts are provided by H214 and E295.

The protein belongs to the ferrochelatase family.

It localises to the cytoplasm. The enzyme catalyses heme b + 2 H(+) = protoporphyrin IX + Fe(2+). It functions in the pathway porphyrin-containing compound metabolism; protoheme biosynthesis; protoheme from protoporphyrin-IX: step 1/1. Functionally, catalyzes the ferrous insertion into protoporphyrin IX. The chain is Ferrochelatase from Allorhizobium ampelinum (strain ATCC BAA-846 / DSM 112012 / S4) (Agrobacterium vitis (strain S4)).